Consider the following 545-residue polypeptide: Periplasmic trehalase (545 aa).

The first 30 residues, 1-30 (MPDRTALPRAMLAAWVLLLLAACSQGPAPT), serve as a signal peptide directing secretion. Substrate is bound by residues R160, 167 to 168 (WD), N204, 213 to 215 (RSQ), 285 to 287 (RQE), and G318. Active-site proton donor/acceptor residues include D320 and E503. E518 provides a ligand contact to substrate.

This sequence belongs to the glycosyl hydrolase 37 family.

The protein resides in the periplasm. The catalysed reaction is alpha,alpha-trehalose + H2O = alpha-D-glucose + beta-D-glucose. Its function is as follows. Provides the cells with the ability to utilize trehalose at high osmolarity by splitting it into glucose molecules that can subsequently be taken up by the phosphotransferase-mediated uptake system. The chain is Periplasmic trehalase from Pseudomonas aeruginosa (strain ATCC 15692 / DSM 22644 / CIP 104116 / JCM 14847 / LMG 12228 / 1C / PRS 101 / PAO1).